The following is a 282-amino-acid chain: Acetyl-coenzyme A carboxylase carboxyl transferase subunit beta (282 aa).

A CoA carboxyltransferase N-terminal domain is found at 29-282; sequence LMQRCPNCGL…LLKYGGMQDD (254 aa). Residues C33, C36, C51, and C54 each coordinate Zn(2+). The segment at 33–54 adopts a C4-type zinc-finger fold; it reads CPNCGLEFFARRLDKYKTCPDC.

Belongs to the AccD/PCCB family. In terms of assembly, acetyl-CoA carboxylase is a heterohexamer composed of biotin carboxyl carrier protein (AccB), biotin carboxylase (AccC) and two subunits each of ACCase subunit alpha (AccA) and ACCase subunit beta (AccD). It depends on Zn(2+) as a cofactor.

It is found in the cytoplasm. It carries out the reaction N(6)-carboxybiotinyl-L-lysyl-[protein] + acetyl-CoA = N(6)-biotinyl-L-lysyl-[protein] + malonyl-CoA. Its pathway is lipid metabolism; malonyl-CoA biosynthesis; malonyl-CoA from acetyl-CoA: step 1/1. Component of the acetyl coenzyme A carboxylase (ACC) complex. Biotin carboxylase (BC) catalyzes the carboxylation of biotin on its carrier protein (BCCP) and then the CO(2) group is transferred by the transcarboxylase to acetyl-CoA to form malonyl-CoA. This Lactobacillus delbrueckii subsp. bulgaricus (strain ATCC BAA-365 / Lb-18) protein is Acetyl-coenzyme A carboxylase carboxyl transferase subunit beta.